Consider the following 202-residue polypeptide: Nascent polypeptide-associated complex subunit alpha (202 aa).

Positions 1–19 (MADPRVEELPDEEVPKTNV) are enriched in basic and acidic residues. The interval 1–42 (MADPRVEELPDEEVPKTNVEDAGSSSESEAGDEPTIPGGAAV) is disordered. The region spanning 46 to 111 (SRNEKKARKA…AKIEDLNATA (66 aa)) is the NAC-A/B domain. Over residues 117–126 (QQLAEAAANE) the composition is skewed to low complexity. The segment at 117 to 165 (QQLAEAAANEHAGHDHEHDHGKGKAPEAEAKKEEEEDDGEEVDESGLEA) is disordered. The segment covering 127-149 (HAGHDHEHDHGKGKAPEAEAKKE) has biased composition (basic and acidic residues). Residues 150-162 (EEEDDGEEVDESG) show a composition bias toward acidic residues. Residues 163–202 (LEAKDIELVMAQANVSRKKAVKALRENDNDIVNSIMALSI) enclose the UBA domain.

This sequence belongs to the NAC-alpha family. As to quaternary structure, part of the nascent polypeptide-associated complex (NAC), consisting of egd2 and egd1. NAC associates with ribosomes via egd1.

It is found in the cytoplasm. It localises to the nucleus. In terms of biological role, component of the nascent polypeptide-associated complex (NAC), a dynamic component of the ribosomal exit tunnel, protecting the emerging polypeptides from interaction with other cytoplasmic proteins to ensure appropriate nascent protein targeting. The NAC complex also promotes mitochondrial protein import by enhancing productive ribosome interactions with the outer mitochondrial membrane and blocks the inappropriate interaction of ribosomes translating non-secretory nascent polypeptides with translocation sites in the membrane of the endoplasmic reticulum. Egd2 may also be involved in transcription regulation. This is Nascent polypeptide-associated complex subunit alpha (egd2) from Aspergillus niger (strain ATCC MYA-4892 / CBS 513.88 / FGSC A1513).